The following is a 349-amino-acid chain: Isopentenyl-diphosphate delta-isomerase (349 aa).

Residue 9–10 participates in substrate binding; the sequence is RK. FMN-binding positions include 65-67, Ser95, and Asn124; that span reads AMT. 95–97 is a substrate binding site; it reads STH. Gln154 contacts substrate. Glu155 is a binding site for Mg(2+). Residues Lys186, Ser211, Thr216, 262-264, and 283-284 contribute to the FMN site; these read GLR and SR.

Belongs to the IPP isomerase type 2 family. Homooctamer. Dimer of tetramers. FMN is required as a cofactor. The cofactor is NADPH. It depends on Mg(2+) as a cofactor.

It is found in the cytoplasm. The catalysed reaction is isopentenyl diphosphate = dimethylallyl diphosphate. Involved in the biosynthesis of isoprenoids. Catalyzes the 1,3-allylic rearrangement of the homoallylic substrate isopentenyl (IPP) to its allylic isomer, dimethylallyl diphosphate (DMAPP). This Staphylococcus epidermidis (strain ATCC 35984 / DSM 28319 / BCRC 17069 / CCUG 31568 / BM 3577 / RP62A) protein is Isopentenyl-diphosphate delta-isomerase.